Consider the following 127-residue polypeptide: Promotilin (127 aa).

The N-terminal stretch at 1–25 is a signal peptide; it reads MLSRKAVAALLLVHVTAMLASQTEG. The tract at residues 41-67 is disordered; sequence REQNKRLRKSLRVQQRSKAAGRLEPQE.

It belongs to the motilin family. Present in the gut mucosa with the exception of the gastric corpus. Also present in medulla oblongata, nucleus of the solitary tract, hypophysis, spinal cord, hypothalamus, and cerebellum but not in the cerebral cortex.

It localises to the secreted. Plays an important role in the regulation of interdigestive gastrointestinal motility and indirectly causes rhythmic contraction of duodenal and colonic smooth muscle. This Cavia porcellus (Guinea pig) protein is Promotilin (MLN).